A 328-amino-acid polypeptide reads, in one-letter code: Probable ABC transporter permease YtrC (328 aa).

Transmembrane regions (helical) follow at residues valine 16–threonine 36, isoleucine 60–glycine 80, glycine 110–valine 130, isoleucine 144–threonine 164, alanine 167–leucine 187, tyrosine 236–phenylalanine 256, valine 277–glycine 297, and isoleucine 300–phenylalanine 320.

The protein belongs to the ABC-5 integral membrane protein family. As to quaternary structure, the complex is composed of 2 ATP-binding proteins (YtrB and YtrE), 2 transmembrane proteins (YtrC and YtrD) and a solute-binding protein (YtrF).

It is found in the cell membrane. Its function is as follows. Part of the ABC transporter complex YtrBCDEF that plays a role in acetoin utilization during stationary phase and sporulation. This Bacillus subtilis (strain 168) protein is Probable ABC transporter permease YtrC (ytrC).